Reading from the N-terminus, the 117-residue chain is MSNIIKQLEQEQMKQDVPSFRPGDSVEVKVWVVEGAKKRLQAFEGVVIAIRNRGLHSAFTVRKVSNGEGVERVFQTHSPVVDSINVKRRGAVRRAKLYYLRERSGKAARIKERLNSK.

Belongs to the bacterial ribosomal protein bL19 family.

In terms of biological role, this protein is located at the 30S-50S ribosomal subunit interface and may play a role in the structure and function of the aminoacyl-tRNA binding site. This is Large ribosomal subunit protein bL19 from Photorhabdus laumondii subsp. laumondii (strain DSM 15139 / CIP 105565 / TT01) (Photorhabdus luminescens subsp. laumondii).